The sequence spans 100 residues: Small ribosomal subunit protein uS14c (100 aa).

Belongs to the universal ribosomal protein uS14 family. As to quaternary structure, part of the 30S ribosomal subunit.

Its subcellular location is the plastid. It localises to the chloroplast. Its function is as follows. Binds 16S rRNA, required for the assembly of 30S particles. In Chaetosphaeridium globosum (Charophycean green alga), this protein is Small ribosomal subunit protein uS14c.